A 403-amino-acid polypeptide reads, in one-letter code: Poly(rC)-binding protein 4 (403 aa).

3 consecutive KH domains span residues 17–67 (TLTL…TITG), 101–154 (PVTL…TVSG), and 241–293 (TSSQ…TITG).

The protein resides in the cytoplasm. Its function is as follows. Single-stranded nucleic acid binding protein that binds preferentially to oligo dC. This is Poly(rC)-binding protein 4 (PCBP4) from Bos taurus (Bovine).